Reading from the N-terminus, the 114-residue chain is Anti-sigma-B factor antagonist (114 aa).

An STAS domain is found at 4–114; sequence SIEIKERDTD…VEGEMNGNNA (111 aa). Position 58 is a phosphoserine (Ser58).

The protein belongs to the anti-sigma-factor antagonist family. Phosphorylated by RsbW on a serine residue.

Its function is as follows. Positive regulator of sigma-B activity. Non-phosphorylated RsbV binds to RsbW, preventing its association with sigma-B. When phosphorylated, releases RsbW, which is then free to complex with and inactivate sigma-B. The sequence is that of Anti-sigma-B factor antagonist (rsbV) from Listeria innocua serovar 6a (strain ATCC BAA-680 / CLIP 11262).